The primary structure comprises 824 residues: Translation initiation factor IF-2 (824 aa).

2 disordered regions span residues 1–32 and 45–232; these read MSDT…GRTK and VPKA…MGGQ. The span at 45-57 shows a compositional bias: low complexity; that stretch reads VPKAGATTSAGGK. Residues 86–144 show a composition bias toward basic and acidic residues; sequence KAREAEEEAARIAEEKARAEERERRRAEQEERERAEREREESLKAKAEEDKRRKDEAEA. A compositionally biased stretch (low complexity) spans 145–167; sequence AAKAAAAPAAEPVVQRPAAKAAP. Positions 170-193 are enriched in basic and acidic residues; sequence APRKQQDRDRDNKRGGKGNDDSRR. Residues 321 to 489 form the tr-type G domain; it reads TRPPVVTIMG…AIALQAEILE (169 aa). The interval 330-337 is G1; that stretch reads GHVDHGKT. Residue 330 to 337 participates in GTP binding; sequence GHVDHGKT. The interval 355–359 is G2; it reads GITQH. Residues 377–380 are G3; it reads DTPG. GTP is bound by residues 377 to 381 and 431 to 434; these read DTPGH and NKID. Positions 431 to 434 are G4; the sequence is NKID. Residues 467-469 form a G5 region; it reads SAI.

Belongs to the TRAFAC class translation factor GTPase superfamily. Classic translation factor GTPase family. IF-2 subfamily.

It is found in the cytoplasm. In terms of biological role, one of the essential components for the initiation of protein synthesis. Protects formylmethionyl-tRNA from spontaneous hydrolysis and promotes its binding to the 30S ribosomal subunits. Also involved in the hydrolysis of GTP during the formation of the 70S ribosomal complex. The polypeptide is Translation initiation factor IF-2 (Roseobacter denitrificans (strain ATCC 33942 / OCh 114) (Erythrobacter sp. (strain OCh 114))).